The sequence spans 161 residues: MNLLRPKLKYFILAILIIAADLYTKYLANTYLEFAQSLKITSFFNLTLLYNHGAAFSLLSNDQTSWQMIMFSTISLIAAIVLIYLIIKQPITEKINLFSFALILGGALGNFYDRAFQGYVIDFLDFHIGNYHWPSFNIADSAITCGVVILIAASLFTKKKS.

4 helical membrane passes run 8–28 (LKYF…KYLA), 40–60 (ITSF…SLLS), 67–87 (QMIM…YLII), and 91–111 (ITEK…LGNF). Residues D122 and D140 contribute to the active site. Residues 136–156 (FNIADSAITCGVVILIAASLF) traverse the membrane as a helical segment.

It belongs to the peptidase A8 family.

Its subcellular location is the cell inner membrane. The enzyme catalyses Release of signal peptides from bacterial membrane prolipoproteins. Hydrolyzes -Xaa-Yaa-Zaa-|-(S,diacylglyceryl)Cys-, in which Xaa is hydrophobic (preferably Leu), and Yaa (Ala or Ser) and Zaa (Gly or Ala) have small, neutral side chains.. It participates in protein modification; lipoprotein biosynthesis (signal peptide cleavage). Functionally, this protein specifically catalyzes the removal of signal peptides from prolipoproteins. In Francisella tularensis subsp. tularensis (strain FSC 198), this protein is Lipoprotein signal peptidase.